The sequence spans 374 residues: Glutamate 5-kinase (374 aa).

Lys-8 contributes to the ATP binding site. Residues Ser-49, Asp-136, and Asn-148 each coordinate substrate. Residues 168–169 and 211–217 contribute to the ATP site; these read TD and TGGMQTK. The PUA domain occupies 276–354; sequence QGILTLDDGA…TQIRQILGYG (79 aa).

This sequence belongs to the glutamate 5-kinase family.

It is found in the cytoplasm. The enzyme catalyses L-glutamate + ATP = L-glutamyl 5-phosphate + ADP. The protein operates within amino-acid biosynthesis; L-proline biosynthesis; L-glutamate 5-semialdehyde from L-glutamate: step 1/2. In terms of biological role, catalyzes the transfer of a phosphate group to glutamate to form L-glutamate 5-phosphate. The protein is Glutamate 5-kinase of Picosynechococcus sp. (strain ATCC 27264 / PCC 7002 / PR-6) (Agmenellum quadruplicatum).